Consider the following 139-residue polypeptide: MSNRTLLAFDFGTKSIGVAIGQEITGTARALTSFKAQEGIPDWQKVEKLLSEWQPDLVVVGLPLNMDGTEQPLTARARKFANRLHGRFGVAIELHDERLSTVEARADLFERGGFKALDKGSVDAASAVIILESWFEAQH.

The protein belongs to the YqgF nuclease family.

It is found in the cytoplasm. Functionally, could be a nuclease involved in processing of the 5'-end of pre-16S rRNA. In Pectobacterium atrosepticum (strain SCRI 1043 / ATCC BAA-672) (Erwinia carotovora subsp. atroseptica), this protein is Putative pre-16S rRNA nuclease.